Here is a 649-residue protein sequence, read N- to C-terminus: DNA topoisomerase 3 (649 aa).

The region spanning Met-1–Ile-134 is the Toprim domain. The Mg(2+) site is built by Glu-7, Asp-103, and Asp-105. Residues Phe-155–Ile-603 form the Topo IA-type catalytic domain. The interval Ser-194–Gln-199 is interaction with DNA. Tyr-328 acts as the O-(5'-phospho-DNA)-tyrosine intermediate in catalysis. Positions Phe-614–Glu-649 are disordered.

The protein belongs to the type IA topoisomerase family. It depends on Mg(2+) as a cofactor.

The catalysed reaction is ATP-independent breakage of single-stranded DNA, followed by passage and rejoining.. Releases the supercoiling and torsional tension of DNA, which is introduced during the DNA replication and transcription, by transiently cleaving and rejoining one strand of the DNA duplex. Introduces a single-strand break via transesterification at a target site in duplex DNA. The scissile phosphodiester is attacked by the catalytic tyrosine of the enzyme, resulting in the formation of a DNA-(5'-phosphotyrosyl)-enzyme intermediate and the expulsion of a 3'-OH DNA strand. The free DNA strand then undergoes passage around the unbroken strand, thus removing DNA supercoils. Finally, in the religation step, the DNA 3'-OH attacks the covalent intermediate to expel the active-site tyrosine and restore the DNA phosphodiester backbone. This chain is DNA topoisomerase 3, found in Salmonella typhimurium (strain LT2 / SGSC1412 / ATCC 700720).